We begin with the raw amino-acid sequence, 208 residues long: Imidazole glycerol phosphate synthase subunit HisH (208 aa).

One can recognise a Glutamine amidotransferase type-1 domain in the interval 1–206 (MIVIIDYDTG…KEVTESCKSS (206 aa)). The active-site Nucleophile is the cysteine 79. Catalysis depends on residues histidine 181 and glutamate 183.

Heterodimer of HisH and HisF.

The protein resides in the cytoplasm. The enzyme catalyses 5-[(5-phospho-1-deoxy-D-ribulos-1-ylimino)methylamino]-1-(5-phospho-beta-D-ribosyl)imidazole-4-carboxamide + L-glutamine = D-erythro-1-(imidazol-4-yl)glycerol 3-phosphate + 5-amino-1-(5-phospho-beta-D-ribosyl)imidazole-4-carboxamide + L-glutamate + H(+). It carries out the reaction L-glutamine + H2O = L-glutamate + NH4(+). It participates in amino-acid biosynthesis; L-histidine biosynthesis; L-histidine from 5-phospho-alpha-D-ribose 1-diphosphate: step 5/9. Its function is as follows. IGPS catalyzes the conversion of PRFAR and glutamine to IGP, AICAR and glutamate. The HisH subunit catalyzes the hydrolysis of glutamine to glutamate and ammonia as part of the synthesis of IGP and AICAR. The resulting ammonia molecule is channeled to the active site of HisF. The protein is Imidazole glycerol phosphate synthase subunit HisH of Listeria innocua serovar 6a (strain ATCC BAA-680 / CLIP 11262).